We begin with the raw amino-acid sequence, 490 residues long: Cell division cycle protein cdt2 (490 aa).

The tract at residues 18-40 (ITSRANNSLPPTPDSSPAAPSKK) is disordered. 6 WD repeats span residues 178-208 (AHNN…KVFD), 226-257 (YHSH…IFWD), 285-317 (GRDC…KLWD), 339-369 (KRDF…YEYS), 387-419 (RISS…GVVV), and 435-464 (GHTK…RVWN).

Belongs to the WD repeat cdt2 family. Component of the DCX(DTL) E3 ubiquitin ligase complex, at least composed of cul4, ddb1, cdt2 and pip1.

It localises to the nucleus. It participates in protein modification; protein ubiquitination. In terms of biological role, substrate-specific adapter of a DCX (DDB1-CUL4-X-box) E3 ubiquitin-protein ligase complex required for DNA replication during mitosis and meiosis. The DCX(DTL) complex, also named CRL4(CDT2) complex, mediates the polyubiquitination and subsequent degradation of cdt1 and spd1. Involved in the regulation of mitotic and pre-meiotic S-phase progression. The sequence is that of Cell division cycle protein cdt2 (cdt2) from Schizosaccharomyces pombe (strain 972 / ATCC 24843) (Fission yeast).